Here is a 104-residue protein sequence, read N- to C-terminus: MKLFSCLMALLLFLLQAVPGLGLPRDTSRCVGYHGYCIRSKVCPKPFAAFGTCSWRQKTCCVDTTSDFHTCQDKGGHCVSPKIRCLEEQLGLCPLKRWTCCKEI.

The first 22 residues, 1–22 (MKLFSCLMALLLFLLQAVPGLG), serve as a signal peptide directing secretion. 3 cysteine pairs are disulfide-bonded: C30/C60, C37/C53, and C43/C61.

Belongs to the beta-defensin family. Detected in outer membrane of the vitelline layer of the egg (at protein level). Expressed in the liver, gall bladder, kidney, testis, ovary and male and female reproductive tracts. Expressed in the ovarian stroma, but not in the ovarian follicles. No expression is detected in bone marrow.

It localises to the secreted. Its subcellular location is the cytoplasmic granule. Functionally, has bactericidal activity. The polypeptide is Gallinacin-11 (GAL11) (Gallus gallus (Chicken)).